A 442-amino-acid chain; its full sequence is Exodeoxyribonuclease 7 large subunit (442 aa).

The protein belongs to the XseA family. In terms of assembly, heterooligomer composed of large and small subunits.

It localises to the cytoplasm. It carries out the reaction Exonucleolytic cleavage in either 5'- to 3'- or 3'- to 5'-direction to yield nucleoside 5'-phosphates.. Functionally, bidirectionally degrades single-stranded DNA into large acid-insoluble oligonucleotides, which are then degraded further into small acid-soluble oligonucleotides. The polypeptide is Exodeoxyribonuclease 7 large subunit (Shewanella loihica (strain ATCC BAA-1088 / PV-4)).